The sequence spans 396 residues: Serine/threonine-protein kinase VRK1 (396 aa).

In terms of domain architecture, Protein kinase spans 37 to 317 (WKLGSPIGQG…LLDYVEKPLY (281 aa)). ATP-binding positions include 43 to 51 (IGQGGFGCI) and K71. A Glycyl lysine isopeptide (Lys-Gly) (interchain with G-Cter in SUMO2) cross-link involves residue K71. D177 (proton acceptor) is an active-site residue. The disordered stretch occupies residues 352 to 396 (KPVAKKRKKEAEESVESSVEDMECSDKQTEEATQTRSKTRKRVQK). The span at 364-374 (ESVESSVEDME) shows a compositional bias: acidic residues. The residue at position 376 (S376) is a Phosphoserine. The interval 387–393 (RSKTRKR) is required for interaction with the nucleosome.

This sequence belongs to the protein kinase superfamily. CK1 Ser/Thr protein kinase family. VRK subfamily. In terms of assembly, interacts with HDAC1, KAT2B, SETDB1, KDM3A and KDM4A. Associates with the nucleosome through interactions with nucleosome DNA, histone H2A and histone H2B; the interaction with H2A and H2B is mediated by the nucleosome acidic patch, a cluster of negatively charged residues of H2A and H2B forming a cleft within the nucleosome core. Post-translationally, autophosphorylated at various serine and threonine residues. Autophosphorylation does not impair its ability to phosphorylate p53/TP53. Phosphorylation by PLK3 leads to induction of Golgi fragmentation during mitosis.

The protein resides in the nucleus. Its subcellular location is the cytoplasm. It is found in the cajal body. The enzyme catalyses L-seryl-[protein] + ATP = O-phospho-L-seryl-[protein] + ADP + H(+). It carries out the reaction L-threonyl-[protein] + ATP = O-phospho-L-threonyl-[protein] + ADP + H(+). Its activity is regulated as follows. Active in presence of Mn(2+), Mg(2+) and Zn(2+), but is not functional with Ca(2+) or Cu(2+). Has a higher affinity for Mn(2+) than for Mg(2+). RAN inhibits its autophosphorylation and its ability to phosphorylate histone H3. Its function is as follows. Serine/threonine kinase involved in the regulation of key cellular processes including the cell cycle, nuclear condensation, transcription regulation, and DNA damage response. Controls chromatin organization and remodeling by mediating phosphorylation of histone H3 on 'Thr-4' and histone H2AX (H2aXT4ph). It also phosphorylates KAT5 in response to DNA damage, promoting KAT5 association with chromatin and histone acetyltransferase activity. Is involved in the regulation of cell cycle progression of neural progenitors, and is required for proper cortical neuronal migration. Is involved in neurite elongation and branching in motor neurons, and has an essential role in Cajal bodies assembly, acting through COIL phosphorylation and the control of coilin degradation. Involved in Golgi disassembly during the cell cycle: following phosphorylation by PLK3 during mitosis, it is required to induce Golgi fragmentation. Phosphorylates BANF1: disrupts its ability to bind DNA, reduces its binding to LEM domain-containing proteins and causes its relocalization from the nucleus to the cytoplasm. Phosphorylates TP53BP1 and p53/TP53 on 'Thr-18', preventing the interaction between p53/TP53 and MDM2. Phosphorylates ATF2 which activates its transcriptional activity. Phosphorylates JUN. The sequence is that of Serine/threonine-protein kinase VRK1 (VRK1) from Bos taurus (Bovine).